A 236-amino-acid polypeptide reads, in one-letter code: 7-cyano-7-deazaguanine synthase (236 aa).

Cysteine 7 to alanine 17 provides a ligand contact to ATP. Residues cysteine 185, cysteine 193, cysteine 196, and cysteine 199 each contribute to the Zn(2+) site.

It belongs to the QueC family. Zn(2+) serves as cofactor.

The catalysed reaction is 7-carboxy-7-deazaguanine + NH4(+) + ATP = 7-cyano-7-deazaguanine + ADP + phosphate + H2O + H(+). It participates in purine metabolism; 7-cyano-7-deazaguanine biosynthesis. Catalyzes the ATP-dependent conversion of 7-carboxy-7-deazaguanine (CDG) to 7-cyano-7-deazaguanine (preQ(0)). The chain is 7-cyano-7-deazaguanine synthase from Sinorhizobium fredii (strain NBRC 101917 / NGR234).